A 154-amino-acid polypeptide reads, in one-letter code: Deoxyuridine 5'-triphosphate nucleotidohydrolase (154 aa).

Residues Arg64–Gly66, Asn77, Thr81–Asp83, and Lys91 each bind substrate.

It belongs to the dUTPase family. As to quaternary structure, homotrimer. The cofactor is Mg(2+).

The catalysed reaction is dUTP + H2O = dUMP + diphosphate + H(+). It functions in the pathway pyrimidine metabolism; dUMP biosynthesis; dUMP from dCTP (dUTP route): step 2/2. This enzyme is involved in nucleotide metabolism: it produces dUMP, the immediate precursor of thymidine nucleotides and it decreases the intracellular concentration of dUTP so that uracil cannot be incorporated into DNA. This chain is Deoxyuridine 5'-triphosphate nucleotidohydrolase, found in Mycobacterium marinum (strain ATCC BAA-535 / M).